The chain runs to 229 residues: 7-cyano-7-deazaguanine synthase (229 aa).

8 to 18 (FSGGQDSTTCL) provides a ligand contact to ATP. Positions 187, 196, 199, and 202 each coordinate Zn(2+).

Belongs to the QueC family. Zn(2+) serves as cofactor.

The enzyme catalyses 7-carboxy-7-deazaguanine + NH4(+) + ATP = 7-cyano-7-deazaguanine + ADP + phosphate + H2O + H(+). It functions in the pathway purine metabolism; 7-cyano-7-deazaguanine biosynthesis. Its function is as follows. Catalyzes the ATP-dependent conversion of 7-carboxy-7-deazaguanine (CDG) to 7-cyano-7-deazaguanine (preQ(0)). This chain is 7-cyano-7-deazaguanine synthase, found in Shewanella halifaxensis (strain HAW-EB4).